The following is a 71-amino-acid chain: DNA-directed RNA polymerase subunit 10-like protein (71 aa).

Residues C7, C10, C44, and C45 each coordinate Zn(2+).

The protein belongs to the archaeal Rpo10/eukaryotic RPB10 RNA polymerase subunit family. In terms of assembly, interacts with IYO.

The protein resides in the nucleus. The polypeptide is DNA-directed RNA polymerase subunit 10-like protein (Arabidopsis thaliana (Mouse-ear cress)).